The following is a 205-amino-acid chain: Snake venom metalloproteinase BmooMPalpha-I (205 aa).

The region spanning 8-204 (RYIELVVVAD…HNPQCILNEP (197 aa)) is the Peptidase M12B domain. Ca(2+) is bound by residues Glu11 and Asp95. Cystine bridges form between Cys119/Cys199, Cys159/Cys183, and Cys161/Cys166. His144 provides a ligand contact to Zn(2+). Glu145 is an active-site residue. Zn(2+) is bound by residues His148 and His154. Ca(2+) is bound by residues Cys199 and Asn202.

Belongs to the venom metalloproteinase (M12B) family. P-I subfamily. As to quaternary structure, monomer. The cofactor is Zn(2+). As to expression, expressed by the venom gland.

It is found in the secreted. Inhibited by EDTA. Not inhibited by the serine proteinase inhibitors aprotinin and benzamidine. Its function is as follows. Snake venom zinc metalloproteinase that cleaves the alpha chain of fibrinogen (FGA) first followed by the beta chain (FGB) and shows no effect on the gamma chain. Cleaves only the beta chain of fibrin, leaving the gamma-dimer untouched. Shows proteolytic activity towards azocasein. Causes defibrinogenation when intraperitoneally administered on mice. The chain is Snake venom metalloproteinase BmooMPalpha-I from Bothrops moojeni (Lance-headed viper).